Consider the following 334-residue polypeptide: HTH-type transcriptional repressor PurR (334 aa).

Residues 2–56 (ATIKDVARLAGVSTTTVSHVINKTRFVAEATQEKVMKAVDELNYAPSAVARSLKC) form the HTH lacI-type domain. Residues 4–23 (IKDVARLAGVSTTTVSHVIN) constitute a DNA-binding region (H-T-H motif). A DNA-binding region spans residues 48-56 (SAVARSLKC). The hypoxanthine site is built by F73, K189, F220, and D274.

In terms of assembly, homodimer.

The protein operates within purine metabolism; purine nucleotide biosynthesis [regulation]. Functionally, is the main repressor of the genes involved in the de novo synthesis of purine nucleotides, regulating purB, purC, purEK, purF, purHD, purL, purMN and guaBA expression. PurR is allosterically activated to bind its cognate DNA by binding the purine corepressors, hypoxanthine or guanine, thereby effecting transcription repression. This is HTH-type transcriptional repressor PurR from Vibrio parahaemolyticus serotype O3:K6 (strain RIMD 2210633).